A 377-amino-acid chain; its full sequence is MVTLGHVTAQQMSFSDALPLRSGAALRDYTLVYETYGTLNADRSNAVLVCHALNASHHVAGTYADSDRSEGWWDNLIGPGKPLDTNRFFVIGVNNPGSCFGSTGPTHPNPATGRPYGADFPVVTVEDWVDAQARLLDGLGIERLAAVIGGSLGGMQALSWTLRHPARVGHALIIASAPNLSAQNIAFNEVARRAIITDPDFHAGHFYAHGVVPKRGLRVARMIGHITYLSDDSMEAKFGRALRSAELAYSTQEIEFQIESYLRYQGDKFSEYFDANTYLLITRALDYFDPAREFGGNLSAALAVARAKFLVVSFTTDWRFSPLRSREIVKALLDNRRDVSYAEIAAPHGHDAFLLDDPRYHGVLRAYFERVAQELPR.

The AB hydrolase-1 domain occupies 45–356 (NAVLVCHALN…PHGHDAFLLD (312 aa)). Catalysis depends on S151, which acts as the Nucleophile. R221 provides a ligand contact to substrate. Catalysis depends on residues D317 and H350. D351 lines the substrate pocket.

Belongs to the AB hydrolase superfamily. MetX family. Homodimer.

The protein resides in the cytoplasm. It carries out the reaction L-homoserine + succinyl-CoA = O-succinyl-L-homoserine + CoA. It functions in the pathway amino-acid biosynthesis; L-methionine biosynthesis via de novo pathway; O-succinyl-L-homoserine from L-homoserine: step 1/1. Transfers a succinyl group from succinyl-CoA to L-homoserine, forming succinyl-L-homoserine. The polypeptide is Homoserine O-succinyltransferase (Leptothrix cholodnii (strain ATCC 51168 / LMG 8142 / SP-6) (Leptothrix discophora (strain SP-6))).